Here is an 856-residue protein sequence, read N- to C-terminus: Alanine/arginine aminopeptidase (856 aa).

Substrate is bound by residues Glu-132 and 264-268; that span reads GAMEN. Residue His-300 coordinates Zn(2+). Glu-301 serves as the catalytic Proton acceptor. Residues His-304 and Glu-323 each coordinate Zn(2+).

The protein belongs to the peptidase M1 family. Zn(2+) serves as cofactor.

Positive effector of glycogen accumulation. May be involved in nutrient-sensing. The protein is Alanine/arginine aminopeptidase (AAP1) of Saccharomyces cerevisiae (strain ATCC 204508 / S288c) (Baker's yeast).